The chain runs to 353 residues: Stearoyl-CoA desaturase 4 (353 aa).

The disordered stretch occupies residues 1 to 42 (MTAHLPQEISSRCSTTNIMEPHSRRQQDGEEKMPLQAEDIRP). Residues 1 to 66 (MTAHLPQEIS…EGPPPKLEYV (66 aa)) lie on the Cytoplasmic side of the membrane. The span at 8–18 (EISSRCSTTNI) shows a compositional bias: polar residues. Positions 21–42 (PHSRRQQDGEEKMPLQAEDIRP) are enriched in basic and acidic residues. A helical membrane pass occupies residues 67-87 (WRNIIFMALLHVGALYGITLV). Residue asparagine 69 coordinates substrate. Topologically, residues 88-91 (PSCK) are lumenal. Residues 92–112 (VYTWLLGVFYNVVAGLGITAG) form a helical membrane-spanning segment. Over 113 to 211 (AHRLWSHRTY…EKLVMFQRRY (99 aa)) the chain is Cytoplasmic. Residues histidine 114 and histidine 119 each contribute to the Fe cation site. Positions 114 to 119 (HRLWSH) match the Histidine box-1 motif. Asparagine 142, arginine 149, and aspartate 150 together coordinate substrate. Fe cation is bound by residues histidine 151, histidine 154, and histidine 155. A Histidine box-2 motif is present at residues 151–155 (HRAHH). Residues arginine 182 and lysine 183 each contribute to the substrate site. A helical membrane pass occupies residues 212-231 (YKLAVTLMFIILPTLVPWYL). Topologically, residues 232 to 235 (WGET) are lumenal. Residues 236–257 (FQHSLCVSNFLRYAVLLNFTWL) form a helical membrane-spanning segment. Tryptophan 256 is a binding site for substrate. Over 258 to 353 (VNSAAHLYGY…RTGDGSHKSS (96 aa)) the chain is Cytoplasmic. Fe cation contacts are provided by histidine 263, histidine 292, histidine 295, and histidine 296. The Histidine box-3 signature appears at 292–296 (HNYHH).

The protein belongs to the fatty acid desaturase type 1 family. Fe(2+) is required as a cofactor. Detected in heart, but not in brain, liver, skin or adipose tissue.

Its subcellular location is the endoplasmic reticulum membrane. It is found in the microsome membrane. It catalyses the reaction octadecanoyl-CoA + 2 Fe(II)-[cytochrome b5] + O2 + 2 H(+) = (9Z)-octadecenoyl-CoA + 2 Fe(III)-[cytochrome b5] + 2 H2O. The catalysed reaction is hexadecanoyl-CoA + 2 Fe(II)-[cytochrome b5] + O2 + 2 H(+) = (9Z)-hexadecenoyl-CoA + 2 Fe(III)-[cytochrome b5] + 2 H2O. Its function is as follows. Stearoyl-CoA desaturase that utilizes O(2) and electrons from reduced cytochrome b5 to introduce the first double bond into saturated fatty acyl-CoA substrates. Catalyzes the insertion of a cis double bond at the delta-9 position into fatty acyl-CoA substrates including palmitoyl-CoA and stearoyl-CoA. Required for the biosynthesis of membrane phospholipids, cholesterol esters and triglycerides. The protein is Stearoyl-CoA desaturase 4 of Mus musculus (Mouse).